Consider the following 347-residue polypeptide: D-alanine--D-alanine ligase (347 aa).

The ATP-grasp domain occupies 138-339 (KILCSHAGIP…YSQVIETILA (202 aa)). Residue 171–226 (SDRFTFPLFVKPVDAGSSFGCTFVDFFEQLPVAIEHALQHGKSAIVEPALDAPEVF) participates in ATP binding. Residues Asp-296, Glu-308, and Asn-310 each coordinate Mg(2+).

Belongs to the D-alanine--D-alanine ligase family. Mg(2+) is required as a cofactor. Requires Mn(2+) as cofactor.

Its subcellular location is the cytoplasm. It carries out the reaction 2 D-alanine + ATP = D-alanyl-D-alanine + ADP + phosphate + H(+). The protein operates within cell wall biogenesis; peptidoglycan biosynthesis. Functionally, cell wall formation. The sequence is that of D-alanine--D-alanine ligase from Tropheryma whipplei (strain Twist) (Whipple's bacillus).